Consider the following 66-residue polypeptide: Vesicular acetylcholine transporter (66 aa).

The chain crosses the membrane as a helical span at residues 1–15 (GMGLANLLYAPVLLL). At 16 to 66 (LRNVGLLTRSRSERDVLLDEPPQGLYDAVRLRERPVSGQDGEPRSPPGPFD) the chain is on the cytoplasmic side. The interval 43–66 (AVRLRERPVSGQDGEPRSPPGPFD) is disordered.

Belongs to the major facilitator superfamily. Vesicular transporter family. In terms of assembly, interacts with SEC14L1.

It is found in the cytoplasmic vesicle. Its subcellular location is the secretory vesicle. It localises to the synaptic vesicle membrane. It carries out the reaction acetylcholine(out) + 2 H(+)(in) = acetylcholine(in) + 2 H(+)(out). The catalysed reaction is choline(in) + 2 H(+)(out) = choline(out) + 2 H(+)(in). The enzyme catalyses serotonin(in) + 2 H(+)(out) = serotonin(out) + 2 H(+)(in). Functionally, electrogenic antiporter that exchanges one cholinergic neurotransmitter, acetylcholine or choline, with two intravesicular protons across the membrane of synaptic vesicles. Uses the electrochemical proton gradient established by the V-type proton-pump ATPase to store neurotransmitters inside the vesicles prior to their release via exocytosis. Determines cholinergic vesicular quantal size at presynaptic nerve terminals in developing neuro-muscular junctions with an impact on motor neuron differentiation and innervation pattern. Part of forebrain cholinergic system, regulates hippocampal synapse transmissions that underlie spatial memory formation. Can transport serotonin. The sequence is that of Vesicular acetylcholine transporter (SLC18A3) from Macaca fuscata fuscata (Japanese macaque).